A 290-amino-acid chain; its full sequence is Phosphatidylserine decarboxylase proenzyme (290 aa).

Active-site charge relay system; for autoendoproteolytic cleavage activity residues include aspartate 96, histidine 153, and serine 257. The active-site Schiff-base intermediate with substrate; via pyruvic acid; for decarboxylase activity is serine 257. At serine 257 the chain carries Pyruvic acid (Ser); by autocatalysis.

The protein belongs to the phosphatidylserine decarboxylase family. PSD-B subfamily. Prokaryotic type I sub-subfamily. In terms of assembly, heterodimer of a large membrane-associated beta subunit and a small pyruvoyl-containing alpha subunit. Requires pyruvate as cofactor. Is synthesized initially as an inactive proenzyme. Formation of the active enzyme involves a self-maturation process in which the active site pyruvoyl group is generated from an internal serine residue via an autocatalytic post-translational modification. Two non-identical subunits are generated from the proenzyme in this reaction, and the pyruvate is formed at the N-terminus of the alpha chain, which is derived from the carboxyl end of the proenzyme. The autoendoproteolytic cleavage occurs by a canonical serine protease mechanism, in which the side chain hydroxyl group of the serine supplies its oxygen atom to form the C-terminus of the beta chain, while the remainder of the serine residue undergoes an oxidative deamination to produce ammonia and the pyruvoyl prosthetic group on the alpha chain. During this reaction, the Ser that is part of the protease active site of the proenzyme becomes the pyruvoyl prosthetic group, which constitutes an essential element of the active site of the mature decarboxylase.

It is found in the cell membrane. It carries out the reaction a 1,2-diacyl-sn-glycero-3-phospho-L-serine + H(+) = a 1,2-diacyl-sn-glycero-3-phosphoethanolamine + CO2. It functions in the pathway phospholipid metabolism; phosphatidylethanolamine biosynthesis; phosphatidylethanolamine from CDP-diacylglycerol: step 2/2. Catalyzes the formation of phosphatidylethanolamine (PtdEtn) from phosphatidylserine (PtdSer). This chain is Phosphatidylserine decarboxylase proenzyme, found in Haemophilus influenzae (strain ATCC 51907 / DSM 11121 / KW20 / Rd).